The chain runs to 77 residues: Putative defensin-like protein 162 (77 aa).

An N-terminal signal peptide occupies residues 1–27; that stretch reads MAKQLCSYMFISMFILSAFLALPSAEG. Intrachain disulfides connect Cys34-Cys77, Cys44-Cys63, Cys49-Cys71, and Cys53-Cys73.

It belongs to the DEFL family.

Its subcellular location is the secreted. In Arabidopsis thaliana (Mouse-ear cress), this protein is Putative defensin-like protein 162 (LCR37).